A 103-amino-acid polypeptide reads, in one-letter code: Large ribosomal subunit protein uL24 (103 aa).

This sequence belongs to the universal ribosomal protein uL24 family. As to quaternary structure, part of the 50S ribosomal subunit.

Its function is as follows. One of two assembly initiator proteins, it binds directly to the 5'-end of the 23S rRNA, where it nucleates assembly of the 50S subunit. In terms of biological role, one of the proteins that surrounds the polypeptide exit tunnel on the outside of the subunit. In Roseobacter denitrificans (strain ATCC 33942 / OCh 114) (Erythrobacter sp. (strain OCh 114)), this protein is Large ribosomal subunit protein uL24.